Reading from the N-terminus, the 334-residue chain is Methionyl-tRNA formyltransferase (334 aa).

A (6S)-5,6,7,8-tetrahydrofolate-binding site is contributed by Ser-111–Pro-114.

The protein belongs to the Fmt family.

It carries out the reaction L-methionyl-tRNA(fMet) + (6R)-10-formyltetrahydrofolate = N-formyl-L-methionyl-tRNA(fMet) + (6S)-5,6,7,8-tetrahydrofolate + H(+). Functionally, attaches a formyl group to the free amino group of methionyl-tRNA(fMet). The formyl group appears to play a dual role in the initiator identity of N-formylmethionyl-tRNA by promoting its recognition by IF2 and preventing the misappropriation of this tRNA by the elongation apparatus. The protein is Methionyl-tRNA formyltransferase of Gloeothece citriformis (strain PCC 7424) (Cyanothece sp. (strain PCC 7424)).